The following is a 92-amino-acid chain: DNA-directed RNA polymerase subunit omega (92 aa).

It belongs to the RNA polymerase subunit omega family. In terms of assembly, the RNAP catalytic core consists of 2 alpha, 1 beta, 1 beta' and 1 omega subunit. When a sigma factor is associated with the core the holoenzyme is formed, which can initiate transcription.

It carries out the reaction RNA(n) + a ribonucleoside 5'-triphosphate = RNA(n+1) + diphosphate. Promotes RNA polymerase assembly. Latches the N- and C-terminal regions of the beta' subunit thereby facilitating its interaction with the beta and alpha subunits. The protein is DNA-directed RNA polymerase subunit omega of Shewanella amazonensis (strain ATCC BAA-1098 / SB2B).